The sequence spans 52 residues: NAGAPQHLCGSHLVDALYLVCGPSGFFYNPKGIVEQCCHKPCSIFDLQNYCN.

3 cysteine pairs are disulfide-bonded: Cys9-Cys38, Cys21-Cys51, and Cys37-Cys42.

It belongs to the insulin family. Heterodimer of a B chain and an A chain linked by two disulfide bonds.

It is found in the secreted. Insulin decreases blood glucose concentration. It increases cell permeability to monosaccharides, amino acids and fatty acids. It accelerates glycolysis, the pentose phosphate cycle, and glycogen synthesis in liver. This Piaractus mesopotamicus (Small-scaled pacu) protein is Insulin (ins).